A 283-amino-acid polypeptide reads, in one-letter code: NADPH-dependent 7-cyano-7-deazaguanine reductase (283 aa).

89–91 contributes to the substrate binding site; that stretch reads IES. 91-92 lines the NADPH pocket; it reads SK. Residue cysteine 190 is the Thioimide intermediate of the active site. Catalysis depends on aspartate 197, which acts as the Proton donor. 229–230 lines the substrate pocket; that stretch reads HE. 258-259 lines the NADPH pocket; sequence RG.

The protein belongs to the GTP cyclohydrolase I family. QueF type 2 subfamily. In terms of assembly, homodimer.

The protein localises to the cytoplasm. The catalysed reaction is 7-aminomethyl-7-carbaguanine + 2 NADP(+) = 7-cyano-7-deazaguanine + 2 NADPH + 3 H(+). The protein operates within tRNA modification; tRNA-queuosine biosynthesis. In terms of biological role, catalyzes the NADPH-dependent reduction of 7-cyano-7-deazaguanine (preQ0) to 7-aminomethyl-7-deazaguanine (preQ1). This is NADPH-dependent 7-cyano-7-deazaguanine reductase from Aromatoleum aromaticum (strain DSM 19018 / LMG 30748 / EbN1) (Azoarcus sp. (strain EbN1)).